A 191-amino-acid polypeptide reads, in one-letter code: Shikimate kinase (191 aa).

24 to 29 (GSGKTS) provides a ligand contact to ATP. Residue T28 participates in Mg(2+) binding. Positions 46, 70, and 92 each coordinate substrate. R130 is a binding site for ATP. R149 is a substrate binding site.

The protein belongs to the shikimate kinase family. As to quaternary structure, monomer. Mg(2+) serves as cofactor.

Its subcellular location is the cytoplasm. The enzyme catalyses shikimate + ATP = 3-phosphoshikimate + ADP + H(+). Its pathway is metabolic intermediate biosynthesis; chorismate biosynthesis; chorismate from D-erythrose 4-phosphate and phosphoenolpyruvate: step 5/7. In terms of biological role, catalyzes the specific phosphorylation of the 3-hydroxyl group of shikimic acid using ATP as a cosubstrate. The sequence is that of Shikimate kinase from Synechococcus sp. (strain CC9902).